A 206-amino-acid polypeptide reads, in one-letter code: Small ribosomal subunit protein uS4 (206 aa).

The S4 RNA-binding domain occupies 96–156; it reads CRLDNVVYRM…EKAKNQLRIV (61 aa).

Belongs to the universal ribosomal protein uS4 family. As to quaternary structure, part of the 30S ribosomal subunit. Contacts protein S5. The interaction surface between S4 and S5 is involved in control of translational fidelity.

In terms of biological role, one of the primary rRNA binding proteins, it binds directly to 16S rRNA where it nucleates assembly of the body of the 30S subunit. Functionally, with S5 and S12 plays an important role in translational accuracy. The sequence is that of Small ribosomal subunit protein uS4 from Pseudomonas fluorescens (strain SBW25).